Reading from the N-terminus, the 212-residue chain is Ras-related protein Rab-2A (212 aa).

A2 carries the N-acetylalanine modification. The segment at A2–K19 is required for interaction with PRKCI. GTP contacts are provided by G16, V17, G18, K19, S20, C21, and T38. Mg(2+) is bound at residue S20. The Switch 1 signature appears at L37–E42. The Mg(2+) site is built by T38 and D61. The Switch 2 signature appears at A63–T72. 6 residues coordinate GTP: G64, N119, K120, D122, A150, and K151. A disordered region spans residues Q190–C212. The segment covering N201–C212 has biased composition (gly residues). S-geranylgeranyl cysteine attachment occurs at residues C211 and C212.

Belongs to the small GTPase superfamily. Rab family. In terms of assembly, interacts with PRKCI. Interacts with TRIP11. Interacts (in GTP-bound form) with GARIN1B. Interacts (GTP-bound) with HOPS complex component VPS39; interaction contributes to obtaining a functional HOPS complex that promotes autophagosome-lysosome membrane fusion driven by STX17-SNAP29-VAMP8. Interacts with VPS41. The cofactor is Mg(2+). Prenylated. Prenylation is required for association with cellular membranes.

The protein localises to the endoplasmic reticulum-Golgi intermediate compartment membrane. The protein resides in the melanosome. It localises to the endoplasmic reticulum membrane. It is found in the golgi apparatus membrane. Its subcellular location is the cytoplasmic vesicle. The protein localises to the secretory vesicle. The protein resides in the acrosome. It localises to the autophagosome membrane. The enzyme catalyses GTP + H2O = GDP + phosphate + H(+). With respect to regulation, regulated by guanine nucleotide exchange factors (GEFs) which promote the exchange of bound GDP for free GTP, GTPase activating proteins (GAPs) which increase the GTP hydrolysis activity, and GDP dissociation inhibitors (GDIs) which inhibit the dissociation of the nucleotide from the GTPase. Functionally, the small GTPases Rab are key regulators of intracellular membrane trafficking, from the formation of transport vesicles to their fusion with membranes. Rabs cycle between active GTP-bound and inactive GDP-bound states. In their active state, drive transport of vesicular carriers from donor organelles to acceptor organelles to regulate the membrane traffic that maintains organelle identity and morphology. RAB2A regulates autophagy by promoting autophagosome-lysosome fusion via recruitment of the HOPS endosomal tethering complex; this process involves autophagosomal RAB2A and lysosomal RAB39A recruitment of HOPS subcomplexes VPS39-VPS11 and VPS41-VPS16-VPS18-VPS33A, respectively, which assemble into a functional complex to mediate membrane tethering and SNAREs-driven membrane fusion. Required for protein transport from the endoplasmic reticulum to the Golgi complex. Regulates the compacted morphology of the Golgi. Together with RAB2B, redundantly required for efficient autophagic flux. This is Ras-related protein Rab-2A from Mus musculus (Mouse).